The sequence spans 187 residues: MKITALEGQKISELSMIEVAHALLEQNGKEMQFSEIIRAIQDYLEKSDDEIKASISSFYTEINTDGSFIPLGNNVWALRSWYAIDEIDEEVIALDEIEDEEEEKPAKKRKKVNAFGIEDEIDPEDEEGTKETTEEDMSYDTQAEDEDKDDVAAYDAELAEVELDNVDEEVDIELEDDEDDSDDTDED.

One can recognise an HTH HARE-type domain in the interval 14-81 (LSMIEVAHAL…GNNVWALRSW (68 aa)). Positions 96–187 (EIEDEEEEKP…EDDSDDTDED (92 aa)) are disordered. Composition is skewed to acidic residues over residues 117–149 (IEDE…EDKD) and 157–187 (ELAE…TDED).

It belongs to the RpoE family. RNAP is composed of a core of 2 alpha, a beta and a beta' subunits. The core is associated with a delta subunit and one of several sigma factors.

Functionally, participates in both the initiation and recycling phases of transcription. In the presence of the delta subunit, RNAP displays an increased specificity of transcription, a decreased affinity for nucleic acids, and an increased efficiency of RNA synthesis because of enhanced recycling. In Lactococcus lactis subsp. cremoris (strain SK11), this protein is Probable DNA-directed RNA polymerase subunit delta.